Here is a 159-residue protein sequence, read N- to C-terminus: Putative polyketide cyclase (159 aa).

It to polyketide cyclases.

Functionally, involved in developmentally regulated synthesis of a compound biosynthetically related to polyketide antibiotics which is essential for spore color in Streptomyces coelicolor. This is Putative polyketide cyclase from Streptomyces coelicolor (strain ATCC BAA-471 / A3(2) / M145).